The chain runs to 319 residues: Beta-ketoacyl-[acyl-carrier-protein] synthase III (319 aa).

Residues Cys112 and His246 contribute to the active site. The ACP-binding stretch occupies residues 247–251 (QANFR). Asn276 is an active-site residue.

It belongs to the thiolase-like superfamily. FabH family. Homodimer.

It localises to the cytoplasm. It catalyses the reaction malonyl-[ACP] + acetyl-CoA + H(+) = 3-oxobutanoyl-[ACP] + CO2 + CoA. Its pathway is lipid metabolism; fatty acid biosynthesis. In terms of biological role, catalyzes the condensation reaction of fatty acid synthesis by the addition to an acyl acceptor of two carbons from malonyl-ACP. Catalyzes the first condensation reaction which initiates fatty acid synthesis and may therefore play a role in governing the total rate of fatty acid production. Possesses both acetoacetyl-ACP synthase and acetyl transacylase activities. Its substrate specificity determines the biosynthesis of branched-chain and/or straight-chain of fatty acids. In Shewanella oneidensis (strain ATCC 700550 / JCM 31522 / CIP 106686 / LMG 19005 / NCIMB 14063 / MR-1), this protein is Beta-ketoacyl-[acyl-carrier-protein] synthase III.